Here is a 410-residue protein sequence, read N- to C-terminus: Lissencephaly-1 homolog (410 aa).

One can recognise a LisH domain in the interval 7–39 (QRDELNRAIADYLRSNGYEEAYSVFKKEAELDM). A coiled-coil region spans residues 56 to 82 (TSVIRLQKKVMELESKLNEAKEEFTSG). WD repeat units lie at residues 106 to 147 (GHRS…RTLK), 148 to 187 (GHTD…CIRT), 190 to 229 (GHDH…CVKT), 232 to 271 (GHRE…CKAE), 274 to 333 (EHEH…CLMT), 336 to 377 (GHDN…KTLN), and 379 to 410 (HEHF…WECR).

This sequence belongs to the WD repeat LIS1/nudF family. In terms of assembly, can self-associate. Component of the cytosolic PAF-AH (I) heterotetrameric enzyme, which is composed of PAFAH1B1 (beta), PAFAH1B2 (alpha2) and PAFAH1B3 (alpha1) subunits. The catalytic activity of the enzyme resides in the alpha1 (PAFAH1B3) and alpha2 (PAFAH1B2) subunits, whereas the beta subunit (PAFAH1B1) has regulatory activity. Trimer formation is not essential for the catalytic activity. Interacts with dynein, dynactin, nde1 and ndel1.

Its subcellular location is the cytoplasm. It is found in the cytoskeleton. The protein localises to the microtubule organizing center. The protein resides in the centrosome. Regulatory subunit (beta subunit) of the cytosolic type I platelet-activating factor (PAF) acetylhydrolase (PAF-AH (I)), an enzyme that catalyzes the hydrolyze of the acetyl group at the sn-2 position of PAF and its analogs and participates in the PAF inactivation. Positively regulates the activity of the minus-end directed microtubule motor protein dynein. May enhance dynein-mediated microtubule sliding by targeting dynein to the microtubule plus end. Required for several dynein- and microtubule-dependent processes such as the maintenance of Golgi integrity, the peripheral transport of microtubule fragments and the coupling of the nucleus and centrosome. May be required for proliferation of neuronal precursors and neuronal migration. In Xenopus tropicalis (Western clawed frog), this protein is Lissencephaly-1 homolog (pafah1b1).